The primary structure comprises 307 residues: Aquaporin Lacbi1:387054 (307 aa).

Residues 1–40 (MSNAPLVHLSDLQKRLRVFAVWEKVRNDGKVHWAIECFAE) lie on the Cytoplasmic side of the membrane. A helical transmembrane segment spans residues 41–61 (MFGVFLYVYFGLGSTAGWVIG). Residues 62-68 (NIIKETN) are Extracellular-facing. The chain crosses the membrane as a helical span at residues 69 to 89 (LSSILQIGLAYAFGIWFAIGL). Residues 90–120 (CSSSSGGHFNPCVTLSFVVFKGFPKLKACRY) lie on the Cytoplasmic side of the membrane. The short motif at 99–101 (NPC) is the NPA 1 element. A helical transmembrane segment spans residues 121–141 (IIAQILGAYIASALVYSQWNV). Over 142–157 (LIEECTLGLIKAKAYD) the chain is Extracellular. A helical transmembrane segment spans residues 158–178 (TTMFTPNGPAGIFALYLVPGA). An NPA 2 motif is present at residues 167–169 (AGI). Over 179-183 (QSVPR) the chain is Cytoplasmic. Residues 184 to 203 (ALLNEFVNSTLIGMIIWAAL) traverse the membrane as a helical segment. Residues 204–216 (DPTNMMVPPAMGP) lie on the Extracellular side of the membrane. A helical transmembrane segment spans residues 217 to 237 (LFISLAYAAVIWGFATPAVAL). The Cytoplasmic segment spans residues 238–264 (NTARDLGARLFAMSIWGTKAAGSGYSA). A helical transmembrane segment spans residues 265-285 (IACLINIPATLLGVFLYEVFF). The Extracellular segment spans residues 286–307 (TDSDRGKLLPILNGKKLKHIFS).

This sequence belongs to the MIP/aquaporin (TC 1.A.8) family.

Its subcellular location is the membrane. The enzyme catalyses H2O(in) = H2O(out). It carries out the reaction NH4(+)(in) = NH4(+)(out). It catalyses the reaction urea(in) = urea(out). The catalysed reaction is glycerol(in) = glycerol(out). Its function is as follows. Water channel required to facilitate the transport of water across membranes. In addition to water, also shows strong ammonium transport activity. Also enables low but statistically significant glycerol and urea permeability. May be involved in fungal nitrogen (ammonium) support of the plant host in symbiosis. This chain is Aquaporin Lacbi1:387054, found in Laccaria bicolor (strain S238N-H82 / ATCC MYA-4686) (Bicoloured deceiver).